The following is a 357-amino-acid chain: 3-isopropylmalate dehydrogenase (357 aa).

NAD(+) is bound at residue 76-89 (GPQWDTIDPALRPE). Residues Arg96, Arg106, Arg134, and Asp224 each contribute to the substrate site. 3 residues coordinate Mg(2+): Asp224, Asp248, and Asp252. 282–294 (GSAPDIAGQGVAN) contributes to the NAD(+) binding site.

The protein belongs to the isocitrate and isopropylmalate dehydrogenases family. LeuB type 1 subfamily. In terms of assembly, homodimer. The cofactor is Mg(2+). It depends on Mn(2+) as a cofactor.

The protein localises to the cytoplasm. The enzyme catalyses (2R,3S)-3-isopropylmalate + NAD(+) = 4-methyl-2-oxopentanoate + CO2 + NADH. The protein operates within amino-acid biosynthesis; L-leucine biosynthesis; L-leucine from 3-methyl-2-oxobutanoate: step 3/4. Functionally, catalyzes the oxidation of 3-carboxy-2-hydroxy-4-methylpentanoate (3-isopropylmalate) to 3-carboxy-4-methyl-2-oxopentanoate. The product decarboxylates to 4-methyl-2 oxopentanoate. The sequence is that of 3-isopropylmalate dehydrogenase from Xylella fastidiosa (strain Temecula1 / ATCC 700964).